A 324-amino-acid chain; its full sequence is Tubulin alpha-8 chain (324 aa).

The GTP site is built by Ser15, Gly19, Thr20, Thr54, Asn81, and Asn103. Residue Glu129 is part of the active site.

It belongs to the tubulin family. In terms of assembly, dimer of alpha and beta chains. A typical microtubule is a hollow water-filled tube with an outer diameter of 25 nm and an inner diameter of 15 nM. Alpha-beta heterodimers associate head-to-tail to form protofilaments running lengthwise along the microtubule wall with the beta-tubulin subunit facing the microtubule plus end conferring a structural polarity. Microtubules usually have 13 protofilaments but different protofilament numbers can be found in some organisms and specialized cells. It depends on Mg(2+) as a cofactor. Post-translationally, some glutamate residues at the C-terminus are polyglycylated, resulting in polyglycine chains on the gamma-carboxyl group. Glycylation is mainly limited to tubulin incorporated into axonemes (cilia and flagella) whereas glutamylation is prevalent in neuronal cells, centrioles, axonemes, and the mitotic spindle. Both modifications can coexist on the same protein on adjacent residues, and lowering polyglycylation levels increases polyglutamylation, and reciprocally. The precise function of polyglycylation is still unclear. In terms of processing, some glutamate residues at the C-terminus are polyglutamylated, resulting in polyglutamate chains on the gamma-carboxyl group. Polyglutamylation plays a key role in microtubule severing by spastin (SPAST). SPAST preferentially recognizes and acts on microtubules decorated with short polyglutamate tails: severing activity by SPAST increases as the number of glutamates per tubulin rises from one to eight, but decreases beyond this glutamylation threshold.

It is found in the cytoplasm. Its subcellular location is the cytoskeleton. The catalysed reaction is GTP + H2O = GDP + phosphate + H(+). Tubulin is the major constituent of microtubules, a cylinder consisting of laterally associated linear protofilaments composed of alpha- and beta-tubulin heterodimers. Microtubules grow by the addition of GTP-tubulin dimers to the microtubule end, where a stabilizing cap forms. Below the cap, tubulin dimers are in GDP-bound state, owing to GTPase activity of alpha-tubulin. The protein is Tubulin alpha-8 chain of Gallus gallus (Chicken).